The chain runs to 280 residues: Manganese transport system membrane protein MntC (280 aa).

The next 9 helical transmembrane spans lie at 16–36 (ALIT…FIIL), 41–61 (LMGD…YMMG), 62–82 (MNFF…IGFV), 92–112 (TAIG…ISFA), 137–157 (TIII…EFLV), 168–188 (YGLN…LVTV), 193–213 (TVGI…AYLL), 221–241 (IVLA…FSYI), and 244–264 (LASG…AFLF).

It belongs to the ABC-3 integral membrane protein family.

The protein localises to the cell membrane. Its function is as follows. This protein is probably a component of a manganese permease, a binding protein-dependent, ATP-driven transport system. The sequence is that of Manganese transport system membrane protein MntC (mntC) from Listeria monocytogenes serovar 1/2a (strain ATCC BAA-679 / EGD-e).